The chain runs to 380 residues: Growth-regulating factor 4 (380 aa).

Residues 1–21 are disordered; the sequence is MDLQLKQWRSQQQNESEEQGS. Residues 82–117 enclose the QLQ domain; sequence FFSWAQWQELELQALIYRYMLAGASVPQELLLPIKK. Residues 151–195 form the WRC domain; the sequence is DPEPGRCKRTDGKKWRCSRDVVAGHKYCDRHIHRGRNRSRKPVET. 2 short sequence motifs (bipartite nuclear localization signal) span residues 156 to 166 and 184 to 191; these read RCKRTDGKKWR and RGRNRSRK. 2 disordered regions span residues 222 to 270 and 284 to 330; these read NNNH…GRSD and RSSD…NMRN. Low complexity-rich tracts occupy residues 228–245 and 285–296; these read SSGS…SCSS and SSDSTSSPMSSS. Polar residues predominate over residues 297-320; the sequence is TCHLSISMPGNNTSSDVSLKLSTG.

This sequence belongs to the GRF family. In terms of tissue distribution, strongly expressed in actively growing and developing tissues, such as roots, upper stems, and shoot tips containing the shoot apical meristem (SAM) and flower buds. Also expressed in mature flowers, but weakly expressed in mature stems and leaves.

The protein resides in the nucleus. In terms of biological role, transcription activator that plays a role in the regulation of cell expansion in leaf and cotyledons tissues. Component of a network formed by miR396, the GRFs and their interacting factors (GIFs) acting in the regulation of meristem function, at least partially through the control of cell proliferation. This chain is Growth-regulating factor 4 (GRF4), found in Arabidopsis thaliana (Mouse-ear cress).